The following is a 453-amino-acid chain: MKKLFGTDGVRGVANVYPMTTEMAMQLGRAAAYIFKSSSKRRHRIVIGKDTRLSGYMLENAMVAGICSMGVDVLLVGPLPTPGIANITSSMRADAGVVISASHNPFQDNGIKFFSADGFKLPDQIELKIEKLIESNKIDSLRPTASEVGKAFRIDDAAGRYIVFLKNTFPTEMDLSGMKIVLDCANGAAYRVAPAVFEELGAEVICLGVSPNGTNINADCGSLYPQVISEAVKKHRADIGIALDGDADRVIVCDEFGHEVDGDHIMAICATDMLRRKLLKKKTLVTTVMSNMGLDIAMRAAGGKIVKTAVGDRYVVEEMRKGGYNLGGEQSGHMIFLDSNTTGDGILSALQLLAVMRRTEKPLSELSEVMIALPQVLVNTRVREKKDITTIPEIAARIRDVEEKLGNEGRVLIRYSGTEPLLRVMLEGKDTYEITAWANEIIDLVRKHLGEKQ.

The active-site Phosphoserine intermediate is serine 102. Positions 102, 244, 246, and 248 each coordinate Mg(2+). A Phosphoserine modification is found at serine 102.

It belongs to the phosphohexose mutase family. Mg(2+) is required as a cofactor. Post-translationally, activated by phosphorylation.

It catalyses the reaction alpha-D-glucosamine 1-phosphate = D-glucosamine 6-phosphate. Functionally, catalyzes the conversion of glucosamine-6-phosphate to glucosamine-1-phosphate. This is Phosphoglucosamine mutase from Pelobacter propionicus (strain DSM 2379 / NBRC 103807 / OttBd1).